We begin with the raw amino-acid sequence, 245 residues long: Small ribosomal subunit protein uS3 (245 aa).

The KH type-2 domain maps to 21–92 (LNEFLTRELA…SVELYAEKVA (72 aa)). A disordered region spans residues 215 to 245 (EEILPTTPVSEQKGAKPEVPVMPQGAPVPTA).

It belongs to the universal ribosomal protein uS3 family.

It is found in the cytoplasm. Its subcellular location is the nucleus. The protein resides in the nucleolus. The protein localises to the mitochondrion inner membrane. It localises to the cytoskeleton. It is found in the spindle. The catalysed reaction is 2'-deoxyribonucleotide-(2'-deoxyribose 5'-phosphate)-2'-deoxyribonucleotide-DNA = a 3'-end 2'-deoxyribonucleotide-(2,3-dehydro-2,3-deoxyribose 5'-phosphate)-DNA + a 5'-end 5'-phospho-2'-deoxyribonucleoside-DNA + H(+). Its function is as follows. Component of the small ribosomal subunit. The ribosome is a large ribonucleoprotein complex responsible for the synthesis of proteins in the cell. Has endonuclease activity and plays a role in repair of damaged DNA. Also involved in other processes including regulation of transcription, translation of its cognate mRNA, spindle formation and chromosome movement during mitosis, and apoptosis. The protein is Small ribosomal subunit protein uS3 (rps3) of Ictalurus punctatus (Channel catfish).